The primary structure comprises 128 residues: Probable 4-amino-4-deoxy-L-arabinose-phosphoundecaprenol flippase subunit ArnF (128 aa).

Over 1–2 (MG) the chain is Cytoplasmic. A helical membrane pass occupies residues 3–23 (LIWGLFSVIIASVAQLSLGFA). Topologically, residues 24-35 (ASHLPPMTHLWD) are periplasmic. Residues 36 to 56 (FIAALLAFGLDARILLLGLLG) form a helical membrane-spanning segment. Topologically, residues 57–75 (YLLSVFCWYKTLHKLALSK) are cytoplasmic. The chain crosses the membrane as a helical span at residues 76–96 (AYALLSMSYVLVWIASMVLPG). Topologically, residues 97–100 (REGT) are periplasmic. A helical transmembrane segment spans residues 101-121 (FSLKALLGVACIMSGLMLIFL). Residues 122-128 (PTTKQRY) lie on the Cytoplasmic side of the membrane.

It belongs to the ArnF family. In terms of assembly, heterodimer of ArnE and ArnF.

The protein resides in the cell inner membrane. It participates in bacterial outer membrane biogenesis; lipopolysaccharide biosynthesis. In terms of biological role, translocates 4-amino-4-deoxy-L-arabinose-phosphoundecaprenol (alpha-L-Ara4N-phosphoundecaprenol) from the cytoplasmic to the periplasmic side of the inner membrane. This is Probable 4-amino-4-deoxy-L-arabinose-phosphoundecaprenol flippase subunit ArnF from Shigella flexneri serotype 5b (strain 8401).